Consider the following 193-residue polypeptide: Orotate phosphoribosyltransferase (193 aa).

Glu114–Ser122 contributes to the 5-phospho-alpha-D-ribose 1-diphosphate binding site. Orotate is bound by residues Thr118 and Arg146.

It belongs to the purine/pyrimidine phosphoribosyltransferase family. PyrE subfamily. Homodimer. The cofactor is Mg(2+).

It carries out the reaction orotidine 5'-phosphate + diphosphate = orotate + 5-phospho-alpha-D-ribose 1-diphosphate. It participates in pyrimidine metabolism; UMP biosynthesis via de novo pathway; UMP from orotate: step 1/2. Its function is as follows. Catalyzes the transfer of a ribosyl phosphate group from 5-phosphoribose 1-diphosphate to orotate, leading to the formation of orotidine monophosphate (OMP). The protein is Orotate phosphoribosyltransferase of Chlorobium phaeobacteroides (strain BS1).